The chain runs to 106 residues: Pyrimidine/purine nucleoside phosphorylase (106 aa).

This sequence belongs to the nucleoside phosphorylase PpnP family.

The enzyme catalyses a purine D-ribonucleoside + phosphate = a purine nucleobase + alpha-D-ribose 1-phosphate. The catalysed reaction is adenosine + phosphate = alpha-D-ribose 1-phosphate + adenine. It catalyses the reaction cytidine + phosphate = cytosine + alpha-D-ribose 1-phosphate. It carries out the reaction guanosine + phosphate = alpha-D-ribose 1-phosphate + guanine. The enzyme catalyses inosine + phosphate = alpha-D-ribose 1-phosphate + hypoxanthine. The catalysed reaction is thymidine + phosphate = 2-deoxy-alpha-D-ribose 1-phosphate + thymine. It catalyses the reaction uridine + phosphate = alpha-D-ribose 1-phosphate + uracil. It carries out the reaction xanthosine + phosphate = alpha-D-ribose 1-phosphate + xanthine. In terms of biological role, catalyzes the phosphorolysis of diverse nucleosides, yielding D-ribose 1-phosphate and the respective free bases. Can use uridine, adenosine, guanosine, cytidine, thymidine, inosine and xanthosine as substrates. Also catalyzes the reverse reactions. The polypeptide is Pyrimidine/purine nucleoside phosphorylase (Burkholderia ambifaria (strain MC40-6)).